The following is a 1337-amino-acid chain: Multidrug resistance protein fer6 (1337 aa).

Residues 1-23 (MTPEASANWFSLCWFAWIDPILT) form the signal peptide. An N-linked (GlcNAc...) asparagine glycan is attached at Asn71. 2 helical membrane-spanning segments follow: residues 94–114 (FWIG…SPLL) and 138–158 (LGSG…CVFL). Residues 95–386 (WIGGLLKLLA…LPIAWNAIVD (292 aa)) form the ABC transmembrane type-1 1 domain. Asn187 carries N-linked (GlcNAc...) asparagine glycosylation. 4 helical membrane-spanning segments follow: residues 220-242 (FFHM…IWSL), 247-269 (LPGI…RLFA), 331-351 (ALAF…YALV), and 359-379 (ILFS…FLPI). The ABC transporter 1 domain maps to 417–667 (IQLEDASFTW…KGRVAELLLT (251 aa)). Positions 432–460 (ADTAKPVNEKKGQDSPSNEKETPVDRAST) are disordered. Basic and acidic residues predominate over residues 438-455 (VNEKKGQDSPSNEKETPV). An N-linked (GlcNAc...) asparagine glycan is attached at Asn465. 478 to 485 (GGVGSGKS) is an ATP binding site. The tract at residues 699–751 (GSASNRNSEASESTTTTVNAESKDTSNAEGVTNKTEKKDLVAPPAQAKSKALM) is disordered. Low complexity predominate over residues 700 to 718 (SASNRNSEASESTTTTVNA). N-linked (GlcNAc...) asparagine glycosylation is present at Asn731. The next 6 membrane-spanning stretches (helical) occupy residues 769 to 789 (YLNA…VLVF), 817 to 837 (GIYA…GVIF), 890 to 909 (AMRT…VLIA), 915 to 933 (FLIP…AAYY), 999 to 1019 (LSVR…ILVV), and 1028 to 1048 (GETG…GWMI). The ABC transmembrane type-1 2 domain maps to 781–1056 (LFLVAVLVFQ…MIRHAAELEN (276 aa)). Asn1057 is a glycosylation site (N-linked (GlcNAc...) asparagine). Residues 1097 to 1325 (IRFEGVEAKY…EKGAFRALCD (229 aa)) enclose the ABC transporter 2 domain. An ATP-binding site is contributed by 1131 to 1138 (GRTGAGKS). A glycan (N-linked (GlcNAc...) asparagine) is linked at Asn1227.

It belongs to the ABC transporter superfamily. ABCC family. Conjugate transporter (TC 3.A.1.208) subfamily.

Its subcellular location is the membrane. In terms of biological role, multidrug resistance protein; part of the gene cluster that mediates the biosynthesis of siderophore ferrichrome A which is contributing to organismal virulence. This chain is Multidrug resistance protein fer6, found in Mycosarcoma maydis (Corn smut fungus).